The sequence spans 639 residues: MGKIIGIDLGTTNSCVAVMQGTQPTVIENSEGNRTTPSMVAVTKTGDRLVGQAAKRQAITNPKNTVFSIKRFMGRKYDEVPNEKKLASYDVINEGGEARVKINDKIYSPQEVSAMILQKMKQTAEDFLGEKVTEAVITVPAYFNDAQRQATKDAGRIAGLDVKRIINEPTAAALAYGLDKKMSSEKVAVFDLGGGTFDISILELGDGVFEVKSTDGDTHLGGDDFDQKIIDYLADEFKKQEGIDLRNDAIALQRLKEAAEKAKVELSSRTDTEINLPFITATQEGPKHLVINLTRAKFEAMCADLFEKILEPCHRAVKNSKLDMKEIDEVVLVGGSTRIPKVQTLVKEFFGKEPNRSVNPDEVVAIGAAIQGGVLKGDVTDVLLLDVSPLSLGIETLGGVMTRLIEANTTIPTRKQEVFSTAADSQTSVEVHVLQGERPMASDNKTLGRFHLGDIPPAPRGVPQIEVTFDIDSNGILSVSAKDKATGKEQTIRIEASGKLNDAEIEKMKQDAKEHAAEDQKKKEEIDIRNSADSLIFSTEKQLTELGDKIPADKKPRLEGSLEKLKEAYKNGTAESIKSAMDDLNKEWSDIASSLYQTPDAGAPGASGPSAGGEPETGKKGGDGEVQNAEYEVIDGNDK.

Threonine 196 is subject to Phosphothreonine; by autocatalysis. A disordered region spans residues 592-639 (ASSLYQTPDAGAPGASGPSAGGEPETGKKGGDGEVQNAEYEVIDGNDK). Residues 601–613 (AGAPGASGPSAGG) are compositionally biased toward low complexity.

Belongs to the heat shock protein 70 family.

Its function is as follows. Acts as a chaperone. The sequence is that of Chaperone protein DnaK from Chlorobium limicola (strain DSM 245 / NBRC 103803 / 6330).